A 309-amino-acid chain; its full sequence is Probable L,D-transpeptidase ErfK/SrfK (309 aa).

Positions 1–21 (MRRITPFFPFFVLLVSHFSLA) are cleaved as a signal peptide. The L,D-TPase catalytic domain occupies 96–231 (EGIVVNVAEM…VPVGTRVQII (136 aa)). His191 functions as the Proton donor/acceptor in the catalytic mechanism. The Nucleophile role is filled by Cys207.

Belongs to the YkuD family.

The protein resides in the periplasm. The protein operates within cell wall biogenesis; peptidoglycan biosynthesis. In Salmonella typhimurium (strain LT2 / SGSC1412 / ATCC 700720), this protein is Probable L,D-transpeptidase ErfK/SrfK (erfK).